A 112-amino-acid polypeptide reads, in one-letter code: C-type natriuretic peptide 3 (112 aa).

An N-terminal signal peptide occupies residues 1 to 19; sequence MSLRAFMLCVCLLLQSVGA. The propeptide occupies 20 to 90; sequence RPASELQNLE…SKRSWGRYKK (71 aa). The tract at residues 33 to 67 is disordered; it reads QDQLSSTEHPEEDRLDRTREEPQLGGSSSREAADE. Basic and acidic residues predominate over residues 40–54; sequence EHPEEDRLDRTREEP. Cysteine 96 and cysteine 112 are joined by a disulfide.

This sequence belongs to the natriuretic peptide family. As to expression, spinal cord, kidney, ovary, heart and spleen, and to a lower extent in brain and liver.

The protein localises to the secreted. Its function is as follows. Exhibits natriuretic and vasodepressant activity. Has cGMP-stimulating activity. May help to regulate body fluid homeostasis in a variety of aquatic environments. The polypeptide is C-type natriuretic peptide 3 (Oryzias latipes (Japanese rice fish)).